The following is a 205-amino-acid chain: MTTDFLFPKIADCSYVSCYCEENVWKLCEQVKRTRPEELSKCYAVFVSNEGRTVPLWRQKAGRGDDQVVIWDYHVFFIHNPLLNRCLVFDLDTTLPFPTYFHKYVTETFRSDLALRPEHHRFFRVIPADTYLIEFSSDRRHMRRPDGSWIKPPPSYPPILSNSNMHCLGDFICMSAGKGPGAVYSLSEFVQNFYKSPHVMAQNNK.

Catalysis depends on residues cysteine 20, histidine 74, and aspartate 90.

The protein belongs to the NTAQ1 family. Monomer.

It carries out the reaction N-terminal L-glutaminyl-[protein] + H2O = N-terminal L-glutamyl-[protein] + NH4(+). Mediates the side-chain deamidation of N-terminal glutamine residues to glutamate, an important step in N-end rule pathway of protein degradation. Conversion of the resulting N-terminal glutamine to glutamate renders the protein susceptible to arginylation, polyubiquitination and degradation as specified by the N-end rule. Does not act on substrates with internal or C-terminal glutamine and does not act on non-glutamine residues in any position. The protein is Protein N-terminal glutamine amidohydrolase (tun) of Drosophila erecta (Fruit fly).